A 484-amino-acid chain; its full sequence is mRNA decay activator protein ZFP36L2 (484 aa).

Phosphoserine is present on residues S57 and S127. Residues 100-152 (YGQLKEPSGGSGTALVTKESKFRDRSFSENGERSQHLLHLQQQQKGGSGSQIN) form a disordered region. Positions 117–134 (KESKFRDRSFSENGERSQ) are enriched in basic and acidic residues. The RNA-binding signature appears at 155–160 (RYKTEL). 2 consecutive C3H1-type zinc fingers follow at residues 155–183 (RYKT…HGFH) and 193–221 (KYKT…HNAD). The RNA-binding stretch occupies residues 172 to 213 (YGEKCQFAHGFHELRSLTRHPKYKTELCRTFHTIGFCPYGPR). 2 disordered regions span residues 261–304 (SLSF…SCSS) and 395–484 (QQGL…ISDD). The segment covering 401–418 (PAPPPAQPPAAPAPPSPP) has biased composition (pro residues). A compositionally biased stretch (low complexity) spans 449 to 468 (YLSGSLSSGSLSGSESPSLD). A phosphoserine; by RPS6KA1 mark is found at S480 and S482.

In terms of assembly, associates with the cytoplasmic CCR4-NOT deadenylase to trigger ARE-containing mRNA deadenylation and decay processes. Interacts with CNOT7; this interaction is inhibited in response to phorbol 12-myristate 13-acetate (PMA) treatment in a p38 MAPK-dependent manner. Interacts with CNOT6L. Post-translationally, phosphorylated by RPS6KA1 at Ser-480 and Ser-482 upon phorbol 12-myristate 13-acetate (PMA) treatment; this phosphorylation results in dissociation of the CCR4-NOT-deadenylase complex and induces p38 MAPK-mediated stabilization of the low-density lipoprotein (LDL) receptor (LDLR) mRNA. Phosphorylation occurs during early preadipocyte differentiation. In terms of tissue distribution, expressed in preadipocytes and adipocytes (at protein level). Expressed at highest level in lymphoid tissues such as thymus, spleen, lung, uterus, ovary, small and large intestine, mammary gland, fat and bone marrow. Expressed at intermediate level in kidney, heart, adrenal, eye and fetal liver. Weakly expressed in brain, skeletal muscle and liver. Expressed through B lymphocyte development. Expressed in superior cervical ganglion (SCG) and dorsal root ganglion (DRG). Expressed in embryonic stem cells (ESCs). Expressed in oocytes.

It localises to the nucleus. The protein localises to the cytoplasm. Functionally, zinc-finger RNA-binding protein that destabilizes several cytoplasmic AU-rich element (ARE)-containing mRNA transcripts by promoting their poly(A) tail removal or deadenylation, and hence provide a mechanism for attenuating protein synthesis. Acts as a 3'-untranslated region (UTR) ARE mRNA-binding adapter protein to communicate signaling events to the mRNA decay machinery. Functions by recruiting the CCR4-NOT deadenylase complex and probably other components of the cytoplasmic RNA decay machinery to the bound ARE-containing mRNAs, and hence promotes ARE-mediated mRNA deadenylation and decay processes. Binds to 3'-UTR ARE of numerous mRNAs. Promotes ARE-containing mRNA decay of the low-density lipoprotein (LDL) receptor (LDLR) mRNA in response to phorbol 12-myristate 13-acetate (PMA) treatment in a p38 MAPK-dependent manner. Positively regulates early adipogenesis by promoting ARE-mediated mRNA decay of immediate early genes (IEGs). Plays a role in mature peripheral neuron integrity by promoting ARE-containing mRNA decay of the transcriptional repressor REST mRNA. Plays a role in ovulation and oocyte meiotic maturation by promoting ARE-mediated mRNA decay of the luteinizing hormone receptor LHCGR mRNA. Acts as a negative regulator of erythroid cell differentiation: promotes glucocorticoid-induced self-renewal of erythroid cells by binding mRNAs that are induced or highly expressed during terminal erythroid differentiation and promotes their degradation, preventing erythroid cell differentiation. In association with ZFP36L1 maintains quiescence on developing B lymphocytes by promoting ARE-mediated decay of several mRNAs encoding cell cycle regulators that help B cells progress through the cell cycle, and hence ensuring accurate variable-diversity-joining (VDJ) recombination process and functional immune cell formation. Together with ZFP36L1 is also necessary for thymocyte development and prevention of T-cell acute lymphoblastic leukemia (T-ALL) transformation by promoting ARE-mediated mRNA decay of the oncogenic transcription factor NOTCH1 mRNA. The protein is mRNA decay activator protein ZFP36L2 of Mus musculus (Mouse).